A 62-amino-acid chain; its full sequence is Probable tautomerase RSc0807 (62 aa).

Proline 2 acts as the Proton acceptor; via imino nitrogen in catalysis.

It belongs to the 4-oxalocrotonate tautomerase family.

The chain is Probable tautomerase RSc0807 from Ralstonia nicotianae (strain ATCC BAA-1114 / GMI1000) (Ralstonia solanacearum).